The primary structure comprises 86 residues: UPF0367 protein NATL1_01981 (86 aa).

This sequence belongs to the UPF0367 family.

This Prochlorococcus marinus (strain NATL1A) protein is UPF0367 protein NATL1_01981.